A 273-amino-acid polypeptide reads, in one-letter code: Outer capsid protein VP7 (273 aa).

It belongs to the aquareoviridae outer capsid VP7 protein family. As to quaternary structure, interacts with VP4 and VP6.

Its subcellular location is the virion. Interacts with VP4 to form the outer icosahedral capsid with an incomplete T=13 symmetry, about 80 nm in diameter, and consisting of 200 VP4-VP7 trimers. The polypeptide is Outer capsid protein VP7 (S10) (Ctenopharyngodon idella (Grass carp)).